We begin with the raw amino-acid sequence, 139 residues long: NADPH-dependent 7-cyano-7-deazaguanine reductase (139 aa).

C34 (thioimide intermediate) is an active-site residue. D41 acts as the Proton donor in catalysis. Substrate-binding positions include 56 to 58 (VEL) and 75 to 76 (HE).

Belongs to the GTP cyclohydrolase I family. QueF type 1 subfamily.

The protein resides in the cytoplasm. It carries out the reaction 7-aminomethyl-7-carbaguanine + 2 NADP(+) = 7-cyano-7-deazaguanine + 2 NADPH + 3 H(+). It functions in the pathway tRNA modification; tRNA-queuosine biosynthesis. Catalyzes the NADPH-dependent reduction of 7-cyano-7-deazaguanine (preQ0) to 7-aminomethyl-7-deazaguanine (preQ1). This chain is NADPH-dependent 7-cyano-7-deazaguanine reductase, found in Methylobacillus flagellatus (strain ATCC 51484 / DSM 6875 / VKM B-1610 / KT).